We begin with the raw amino-acid sequence, 234 residues long: Glucosamine-6-phosphate deaminase (234 aa).

Asp-62 (proton acceptor; for enolization step) is an active-site residue. Asn-128 functions as the For ring-opening step in the catalytic mechanism. His-130 acts as the Proton acceptor; for ring-opening step in catalysis. The active-site For ring-opening step is Glu-135.

The protein belongs to the glucosamine/galactosamine-6-phosphate isomerase family. NagB subfamily.

It carries out the reaction alpha-D-glucosamine 6-phosphate + H2O = beta-D-fructose 6-phosphate + NH4(+). It participates in amino-sugar metabolism; N-acetylneuraminate degradation; D-fructose 6-phosphate from N-acetylneuraminate: step 5/5. In terms of biological role, catalyzes the reversible isomerization-deamination of glucosamine 6-phosphate (GlcN6P) to form fructose 6-phosphate (Fru6P) and ammonium ion. The polypeptide is Glucosamine-6-phosphate deaminase (Streptococcus suis (strain 98HAH33)).